The following is a 578-amino-acid chain: Nuclear receptor subfamily 1 group D member 2 (578 aa).

The segment at 1 to 60 (MELNAGGVIAYISSSSSASSPASCHSEGSENSFQSSSSSVPSSPNSSNCDANGNPKNTDV) is required for phosphorylation by CSNK1E and cytoplasmic localization. Residues 1-99 (MELNAGGVIA…HSGMTKFSGM (99 aa)) are modulating. Low complexity predominate over residues 13–47 (SSSSSASSPASCHSEGSENSFQSSSSSVPSSPNSS). The tract at residues 13–89 (SSSSSASSPA…KPGAPGMTKS (77 aa)) is disordered. Ser46 is modified (phosphoserine; by GSK3-beta). The segment covering 48–61 (NCDANGNPKNTDVS) has biased composition (polar residues). The nuclear receptor DNA-binding region spans 100–176 (VLLCKVCGDV…VGMSRDAVRF (77 aa)). 2 consecutive NR C4-type zinc fingers follow at residues 103 to 123 (CKVC…CEGC) and 140 to 164 (CLKN…FKKC). N6-acetyllysine; by KAT5 occurs at positions 162 and 163. The disordered stretch occupies residues 214–247 (EPHEQSVPPAQEQLRPKPQLEQENIKSTPPPSDF). Basic and acidic residues predominate over residues 227–237 (LRPKPQLEQEN). 2 cysteine pairs are disulfide-bonded: Cys336–Cys342 and Cys373–Cys383. Residues 368 to 578 (RNSYLCSTGG…EELLAFKVHP (211 aa)) form the NR LBD domain. Positions 383 and 567 each coordinate heme. Positions 396–578 (SGHEIWEEFS…EELLAFKVHP (183 aa)) are interaction with ZNHIT1.

This sequence belongs to the nuclear hormone receptor family. NR1 subfamily. In terms of assembly, binds DNA as a monomer or a homodimer. Interacts with NCOA5 coactivator, leading to a strong increase of transcription of target genes. Interacts (via N-terminus) with KAT5. Interacts (via C-terminus) with HDAC1. Interacts with ZNHIT1. Interacts with SIAH2. Deacetylated by HDAC1. Acetylation and deacetylation regulate its transcriptional regulatory activity. Post-translationally, under more reducing intracellular redox conditions, Cys-383 is in its heme-bound state, which is optimal for recruitment of the NCOR1/HDAC3 corepressor complex and repression of target genes. When subjected to oxidative stress conditions, Cys-383 undergoes oxidation to form a disulfide bridge with Cys-373, also triggering a ligand switch that results in release of bound heme and derepression of target genes. In terms of processing, ubiquitinated by SIAH2; leading to its proteasomal degradation. Phosphorylated by CSNK1E; phosphorylation enhances its cytoplasmic localization.

The protein localises to the nucleus. It localises to the cytoplasm. Its activity is regulated as follows. The heme-bound form can bind gaseous signaling molecules such as CO and nitric oxide (NO) and NO can reverse its transcriptional repressor activity. Functionally, transcriptional repressor which coordinates circadian rhythm and metabolic pathways in a heme-dependent manner. Integral component of the complex transcription machinery that governs circadian rhythmicity and forms a critical negative limb of the circadian clock by directly repressing the expression of core clock components BMAL1 and CLOCK. Also regulates genes involved in metabolic functions, including lipid metabolism and the inflammatory response. Acts as a receptor for heme which stimulates its interaction with the NCOR1/HDAC3 corepressor complex, enhancing transcriptional repression. Recognizes two classes of DNA response elements within the promoter of its target genes and can bind to DNA as either monomers or homodimers, depending on the nature of the response element. Binds as a monomer to a response element composed of the consensus half-site motif 5'-[A/G]GGTCA-3' preceded by an A/T-rich 5' sequence (RevRE), or as a homodimer to a direct repeat of the core motif spaced by two nuclegotides (RevDR-2). Acts as a potent competitive repressor of ROR alpha (RORA) function and also negatively regulates the expression of NR1D1. Regulates lipid and energy homeostasis in the skeletal muscle via repression of genes involved in lipid metabolism and myogenesis including: CD36, FABP3, FABP4, UCP3, SCD1 and MSTN. Regulates hepatic lipid metabolism via the repression of APOC3. Represses gene expression at a distance in macrophages by inhibiting the transcription of enhancer-derived RNAs (eRNAs). In addition to its activity as a repressor, can also act as a transcriptional activator. Acts as a transcriptional activator of the sterol regulatory element-binding protein 1 (SREBF1) and the inflammatory mediator interleukin-6 (IL6) in the skeletal muscle. Plays a role in the regulation of circadian sleep/wake cycle; essential for maintaining wakefulness during the dark phase or active period. Key regulator of skeletal muscle mitochondrial function; negatively regulates the skeletal muscle expression of core clock genes and genes involved in mitochondrial biogenesis, fatty acid beta-oxidation and lipid metabolism. May play a role in the circadian control of neutrophilic inflammation in the lung. The polypeptide is Nuclear receptor subfamily 1 group D member 2 (Rattus norvegicus (Rat)).